The sequence spans 162 residues: Cytochrome c-type biogenesis protein CcmE (162 aa).

Residues 1–8 lie on the Cytoplasmic side of the membrane; sequence MNPVRKKR. A helical; Signal-anchor for type II membrane protein transmembrane segment spans residues 9 to 29; sequence LIIVLAILVGVGAAVGLALSA. At 30–162 the chain is on the periplasmic side; it reads LQQNINLFYT…GETSYNQEGK (133 aa). Residues His-124 and Tyr-128 each contribute to the heme site. Over residues 139–148 the composition is skewed to basic and acidic residues; that stretch reads DSGQLKHYEN. The segment at 139-162 is disordered; sequence DSGQLKHYENGKAAGETSYNQEGK.

This sequence belongs to the CcmE/CycJ family.

It localises to the cell inner membrane. Functionally, heme chaperone required for the biogenesis of c-type cytochromes. Transiently binds heme delivered by CcmC and transfers the heme to apo-cytochromes in a process facilitated by CcmF and CcmH. This chain is Cytochrome c-type biogenesis protein CcmE, found in Pseudomonas paraeruginosa (strain DSM 24068 / PA7) (Pseudomonas aeruginosa (strain PA7)).